Here is a 105-residue protein sequence, read N- to C-terminus: UPF0145 protein OEOE_0637 (105 aa).

The protein belongs to the UPF0145 family.

This Oenococcus oeni (strain ATCC BAA-331 / PSU-1) protein is UPF0145 protein OEOE_0637.